A 96-amino-acid chain; its full sequence is ATP synthase subunit c (96 aa).

A run of 2 helical transmembrane segments spans residues 28-50 (LGAG…NIGA) and 75-95 (AVTE…LFVL).

This sequence belongs to the ATPase C chain family. As to quaternary structure, F-type ATPases have 2 components, F(1) - the catalytic core - and F(0) - the membrane proton channel. F(1) has five subunits: alpha(3), beta(3), gamma(1), delta(1), epsilon(1). F(0) has three main subunits: a(1), b(2) and c(10-14). The alpha and beta chains form an alternating ring which encloses part of the gamma chain. F(1) is attached to F(0) by a central stalk formed by the gamma and epsilon chains, while a peripheral stalk is formed by the delta and b chains.

The protein resides in the cell inner membrane. Its function is as follows. F(1)F(0) ATP synthase produces ATP from ADP in the presence of a proton or sodium gradient. F-type ATPases consist of two structural domains, F(1) containing the extramembraneous catalytic core and F(0) containing the membrane proton channel, linked together by a central stalk and a peripheral stalk. During catalysis, ATP synthesis in the catalytic domain of F(1) is coupled via a rotary mechanism of the central stalk subunits to proton translocation. Functionally, key component of the F(0) channel; it plays a direct role in translocation across the membrane. A homomeric c-ring of between 10-14 subunits forms the central stalk rotor element with the F(1) delta and epsilon subunits. This Petrotoga mobilis (strain DSM 10674 / SJ95) protein is ATP synthase subunit c.